Reading from the N-terminus, the 470-residue chain is MQNPYGHFTNNTTEDREASSQGGPFGQSLNRPLDYAGSFPSLTYNNNNFIANQQPSLPLPEPRLSWNNVNQVSNPLMVTPLPGLQKRMNKNIKKKLPRVSKKASALSNGVSGNVMSNSNIVGHGAVGSASGWKVEMGGSDELERRKRRAERFSQGPSATTNSNDNLNEDFANLNAISSKSHQYDKKIHVVGRCQTLEKSYLRLTSEPNPDLIRPPNILQKMYCLLMDKYQSKTATYTYLCDQFKSMRQDLRVQMIENSFTIKVYQTHARIALENGDLGEFNQCQNRIMALFENPTIPKKSYSEFICYSVLYSMLTEDYPSISHLKLKLIDDGSSEILEDEHVKMIFELSDMKLVGNYHYFMKNYLKLHKFEKCLINSFLNLEKLIFLTIICKSYNQVNLDFVKSEFNFNSIEETTNFLNEQNLTEFILNKQITDSNGKSSNIKILNTKGCRVQLIQNYMKSKKIDIKGQK.

Methionine 1 is subject to N-acetylmethionine. 3 stretches are compositionally biased toward polar residues: residues 1-12 (MQNPYGHFTNNT), 19-30 (SSQGGPFGQSLN), and 154-165 (QGPSATTNSNDN). Disordered stretches follow at residues 1–31 (MQNP…SLNR) and 137–167 (GGSD…DNLN). The region spanning 276–450 (DLGEFNQCQN…NIKILNTKGC (175 aa)) is the PCI domain.

This sequence belongs to the THP3 family. Interacts with CSN12 and SEM1.

Its subcellular location is the nucleus. Functionally, forms a complex with CSN12 that is recruited to transcribed genes and required for transcription elongation. May also be involved in pre-mRNA splicing. This is Protein THP3 (THP3) from Saccharomyces cerevisiae (strain ATCC 204508 / S288c) (Baker's yeast).